Reading from the N-terminus, the 85-residue chain is Small ribosomal subunit protein eS27 (85 aa).

The C4-type zinc-finger motif lies at 38–60 (CHGCRTITTVFSHAQNVVICSSC).

The protein belongs to the eukaryotic ribosomal protein eS27 family. Zn(2+) is required as a cofactor.

The polypeptide is Small ribosomal subunit protein eS27 (rps27) (Dictyostelium discoideum (Social amoeba)).